A 789-amino-acid polypeptide reads, in one-letter code: Trans-4-hydroxy-L-proline dehydratase (789 aa).

Positions E7–L663 constitute a PFL domain. C434 serves as the catalytic Cysteine radical intermediate. The active-site Proton acceptor is E436. A Glycine radical domain is found at E670–F789. The residue at position 765 (G765) is a Glycine radical.

Belongs to the glycyl radical enzyme (GRE) family. HYPD subfamily. In terms of processing, requires the activating protein PflE to generate the key active site glycyl radical on Gly-765 that is involved in catalysis.

The enzyme catalyses trans-4-hydroxy-L-proline = (S)-1-pyrroline-5-carboxylate + H2O + H(+). In terms of biological role, glycine radical enzyme that catalyzes the dehydration of the non-proteinogenic amino acid trans-4-hydroxy-L-proline (Hyp) to produce delta(1)-pyrroline-5-carboxylate (P5C). Is involved in the anaerobic degradation of 4-hydroxyproline. In Clostridioides difficile (Peptoclostridium difficile), this protein is Trans-4-hydroxy-L-proline dehydratase.